A 365-amino-acid chain; its full sequence is tRNA-specific 2-thiouridylase MnmA (365 aa).

ATP-binding positions include 14–21 (AMSGGVDS) and leucine 40. Cysteine 108 serves as the catalytic Nucleophile. The cysteines at positions 108 and 204 are disulfide-linked. Residue glycine 132 participates in ATP binding. The segment at 154-156 (KDQ) is interaction with tRNA. The active-site Cysteine persulfide intermediate is the cysteine 204.

Belongs to the MnmA/TRMU family.

It is found in the cytoplasm. The catalysed reaction is S-sulfanyl-L-cysteinyl-[protein] + uridine(34) in tRNA + AH2 + ATP = 2-thiouridine(34) in tRNA + L-cysteinyl-[protein] + A + AMP + diphosphate + H(+). In terms of biological role, catalyzes the 2-thiolation of uridine at the wobble position (U34) of tRNA, leading to the formation of s(2)U34. This is tRNA-specific 2-thiouridylase MnmA from Rickettsia massiliae (strain Mtu5).